The chain runs to 888 residues: Interference hedgehog (888 aa).

The signal sequence occupies residues 1 to 24 (MSLTRFSLCLLLTLLLAAIPVYLA). At 25–688 (SPDPGVRILR…SHNETFNLNP (664 aa)) the chain is on the extracellular side. Ig-like C2-type domains lie at 28 to 123 (PGVR…ARLE), 134 to 215 (EGFK…VRLA), 234 to 321 (PHLL…SIQL), and 327 to 414 (PRIV…LQVN). Intrachain disulfides connect C51–C106, C155–C203, and C257–C305. N-linked (GlcNAc...) asparagine glycosylation is found at N80, N185, N192, N281, N336, N365, N369, and N455. C348 and C396 form a disulfide bridge. Fibronectin type-III domains lie at 450 to 557 (PPSA…LQRG) and 565 to 660 (VPSL…TQRP). Residues R486 and K493 each contribute to the heparin site. N-linked (GlcNAc...) asparagine glycosylation occurs at N516. Residue R531 participates in heparin binding. A glycan (N-linked (GlcNAc...) asparagine) is linked at N547. The span at 655–667 (GRTQRPRVSTTTE) shows a compositional bias: polar residues. The tract at residues 655-679 (GRTQRPRVSTTTEPAVHAMDTTTPS) is disordered. N-linked (GlcNAc...) asparagine glycosylation is present at N681. The helical transmembrane segment at 689 to 709 (LLTGTIGGGALLVLLVVSACL) threads the bilayer. The Cytoplasmic segment spans residues 710 to 888 (CLCRRRSSRG…SSGSLNSVGV (179 aa)). 3 disordered regions span residues 759 to 789 (AQQQ…DMSY), 812 to 864 (SSSL…PGRV), and 869 to 888 (ARLS…SVGV). A compositionally biased stretch (low complexity) spans 760-775 (QQQQQQQQQQQQQQQQ). The span at 843–859 (QPTDGSTADSPRLQASN) shows a compositional bias: polar residues. A compositionally biased stretch (low complexity) spans 872–888 (SSRSENLSSGSLNSVGV).

The protein belongs to the immunoglobulin superfamily. IHOG family. As to quaternary structure, homodimer. Heterotetramer; 2 iHog chains bind 2 hh chains when facilitated by heparin, heparin is required to promote high-affinity interactions between hh and iHog.

Its subcellular location is the membrane. Its function is as follows. Mediates response to the active Hedgehog (Hh) protein signal in embryos, functioning upstream or at the level of patched (ptc). This chain is Interference hedgehog, found in Drosophila grimshawi (Hawaiian fruit fly).